A 352-amino-acid polypeptide reads, in one-letter code: MIPPCDPTILEHNPLFKRLHQHLTASLLNPDGSTRTTDAQPARREIIMELRGCRMRNAKKQIKKQMLRQLALDPDNELPDECREPLAIISLYLEASPNELDQIRDPRDGVDVDTLLASDFEKFYAKLPFIMPHFTRSLASALHDLRSLANAGNKAALSNTSTEGSRSRMQVRCRSKAARQDPLGPQLSERLQNLRHLQLSELAGGRTRMAGTAAEVLAMRAAILERTVTLLERTKHGAMARATKAKAEHLAAVARGLEGKLRVMRLDALAAIHTPEVNAALSHYFQHLRNARERLEERRRLVLDELKAYEDADSSTINGPAKPGPIVGFIRQYGNLIKQIEDIKSEIRRLQR.

Residues 285–352 (FQHLRNARER…IKSEIRRLQR (68 aa)) adopt a coiled-coil conformation.

This is an uncharacterized protein from Emericella nidulans (strain FGSC A4 / ATCC 38163 / CBS 112.46 / NRRL 194 / M139) (Aspergillus nidulans).